Here is a 237-residue protein sequence, read N- to C-terminus: Ribosomal RNA small subunit methyltransferase G (237 aa).

Residues Gly-78, Phe-83, 129 to 130 (AE), and Arg-148 contribute to the S-adenosyl-L-methionine site. Positions 218-237 (KKETPNKFPRKAGMPNKRPL) are disordered.

Belongs to the methyltransferase superfamily. RNA methyltransferase RsmG family.

It localises to the cytoplasm. Functionally, specifically methylates the N7 position of a guanine in 16S rRNA. The chain is Ribosomal RNA small subunit methyltransferase G from Streptococcus suis (strain 98HAH33).